The primary structure comprises 222 residues: 2-amino-5-formylamino-6-ribosylaminopyrimidin-4(3H)-one 5'-monophosphate deformylase (222 aa).

4 residues coordinate Fe cation: Glu-29, His-31, Asp-40, and His-108.

Belongs to the creatininase superfamily. FAPy deformylase family. In terms of assembly, homodimer. The cofactor is Fe(2+). Zn(2+) is required as a cofactor.

The enzyme catalyses 2-amino-5-formylamino-6-(5-phospho-D-ribosylamino)pyrimidin-4(3H)-one + H2O = 2,5-diamino-6-(1-D-ribosylamino)pyrimidin-4(3H)-one 5'-phosphate + formate + H(+). It participates in cofactor biosynthesis; coenzyme F420 biosynthesis. Its pathway is cofactor biosynthesis; riboflavin biosynthesis. Catalyzes the hydrolysis of the formamide of 2-amino-5-formylamino-6-ribosylamino-4(3H)-pyrimidinone 5'-monophosphate (FAPy) to form 2,5-diamino-6-ribosylamino-4(3H)-pyrimidinone 5'-phosphate (APy). This chain is 2-amino-5-formylamino-6-ribosylaminopyrimidin-4(3H)-one 5'-monophosphate deformylase, found in Methanocaldococcus infernus (strain DSM 11812 / JCM 15783 / ME).